A 93-amino-acid chain; its full sequence is Putative membrane protein insertion efficiency factor (93 aa).

A disordered region spans residues 72–93 (VPEHFPSWRGPHPKTPSRKTPE). Residues 82 to 93 (PHPKTPSRKTPE) show a composition bias toward basic residues.

It belongs to the UPF0161 family.

It is found in the cell membrane. In terms of biological role, could be involved in insertion of integral membrane proteins into the membrane. The polypeptide is Putative membrane protein insertion efficiency factor (Deinococcus geothermalis (strain DSM 11300 / CIP 105573 / AG-3a)).